The primary structure comprises 130 residues: Aspartate 1-decarboxylase (130 aa).

The active-site Schiff-base intermediate with substrate; via pyruvic acid is Ser-25. Ser-25 bears the Pyruvic acid (Ser) mark. Residue Thr-57 participates in substrate binding. Tyr-58 serves as the catalytic Proton donor. A substrate-binding site is contributed by 73–75; sequence GAA.

It belongs to the PanD family. Heterooctamer of four alpha and four beta subunits. Pyruvate is required as a cofactor. In terms of processing, is synthesized initially as an inactive proenzyme, which is activated by self-cleavage at a specific serine bond to produce a beta-subunit with a hydroxyl group at its C-terminus and an alpha-subunit with a pyruvoyl group at its N-terminus.

It is found in the cytoplasm. The catalysed reaction is L-aspartate + H(+) = beta-alanine + CO2. The protein operates within cofactor biosynthesis; (R)-pantothenate biosynthesis; beta-alanine from L-aspartate: step 1/1. Its function is as follows. Catalyzes the pyruvoyl-dependent decarboxylation of aspartate to produce beta-alanine. This is Aspartate 1-decarboxylase from Myxococcus xanthus (strain DK1622).